A 94-amino-acid polypeptide reads, in one-letter code: Small ribosomal subunit protein bS18 (94 aa).

A compositionally biased stretch (polar residues) spans 1–11 (MANERPTSQQR). The interval 1–24 (MANERPTSQQRPAGGPRKRRPFQR) is disordered.

This sequence belongs to the bacterial ribosomal protein bS18 family. As to quaternary structure, part of the 30S ribosomal subunit. Forms a tight heterodimer with protein bS6.

Functionally, binds as a heterodimer with protein bS6 to the central domain of the 16S rRNA, where it helps stabilize the platform of the 30S subunit. This is Small ribosomal subunit protein bS18 from Pelobacter propionicus (strain DSM 2379 / NBRC 103807 / OttBd1).